A 354-amino-acid chain; its full sequence is Phenylalanine--tRNA ligase alpha subunit (354 aa).

Glutamate 279 is a Mg(2+) binding site.

It belongs to the class-II aminoacyl-tRNA synthetase family. Phe-tRNA synthetase alpha subunit type 1 subfamily. Tetramer of two alpha and two beta subunits. Mg(2+) serves as cofactor.

It localises to the cytoplasm. The catalysed reaction is tRNA(Phe) + L-phenylalanine + ATP = L-phenylalanyl-tRNA(Phe) + AMP + diphosphate + H(+). The sequence is that of Phenylalanine--tRNA ligase alpha subunit from Cupriavidus pinatubonensis (strain JMP 134 / LMG 1197) (Cupriavidus necator (strain JMP 134)).